The chain runs to 87 residues: Ribonuclease P protein component 1 (87 aa).

Belongs to the eukaryotic/archaeal RNase P protein component 1 family. In terms of assembly, consists of a catalytic RNA component and at least 4-5 protein subunits.

The protein localises to the cytoplasm. It carries out the reaction Endonucleolytic cleavage of RNA, removing 5'-extranucleotides from tRNA precursor.. In terms of biological role, part of ribonuclease P, a protein complex that generates mature tRNA molecules by cleaving their 5'-ends. The sequence is that of Ribonuclease P protein component 1 from Thermoplasma acidophilum (strain ATCC 25905 / DSM 1728 / JCM 9062 / NBRC 15155 / AMRC-C165).